The primary structure comprises 331 residues: Olfactory receptor 6S1 (331 aa).

Residues 1-29 (MSPDGNHSSDPTEFVLAGLPNLNSARVEL) are Extracellular-facing. The N-linked (GlcNAc...) asparagine glycan is linked to Asn6. Residues 30–50 (FSVFLLVYLLNLTGNVLIVGV) form a helical membrane-spanning segment. The Cytoplasmic portion of the chain corresponds to 51–59 (VRADTRLQT). A helical transmembrane segment spans residues 60 to 80 (PMYFFLGNLSCLEILLTSVII). Topologically, residues 81–99 (PKMLSNFLSRQHTISFAAC) are extracellular. Cysteines 99 and 182 form a disulfide. The chain crosses the membrane as a helical span at residues 100–120 (ITQFYFYFFLGASEFLLLAVM). Over 121 to 147 (SADRYLAICHPLRYPLLMSGAVCFRVA) the chain is Cytoplasmic. A helical membrane pass occupies residues 148–168 (LACWVGGLVPVLGPTVAVALL). The Extracellular segment spans residues 169–207 (PFCKQGAVVQHFFCDSGPLLRLACTNTKKLEETDFVLAS). A helical membrane pass occupies residues 208-228 (LVIVSSLLITAVSYGLIVLAV). The Cytoplasmic portion of the chain corresponds to 229 to 242 (LSIPSASGRQKAFS). The chain crosses the membrane as a helical span at residues 243–263 (TCTSHLIVVTLFYGSAIFLYV). Topologically, residues 264-274 (RPSQSGSVDTN) are extracellular. Residues 275–295 (WAVTVITTFVTPLLNPFIYAL) form a helical membrane-spanning segment. At 296–331 (RNEQVKEALKDMFRKVVAGVLGNLLLDKCLSEKAVK) the chain is on the cytoplasmic side.

The protein belongs to the G-protein coupled receptor 1 family.

It localises to the cell membrane. In terms of biological role, odorant receptor. The chain is Olfactory receptor 6S1 (OR6S1) from Homo sapiens (Human).